The sequence spans 142 residues: uncharacterized protein (142 aa).

Belongs to the IIV-3 015R family.

This is an uncharacterized protein from Aedes vexans (Inland floodwater mosquito).